The primary structure comprises 461 residues: Deoxyhypusine synthase (461 aa).

Residues glutamate 166–histidine 167, glutamate 331, histidine 377, glycine 403–aspartate 405, and glutamate 412–lysine 418 each bind spermidine. Residue lysine 418 is the Nucleophile of the active site. The chain crosses the membrane as a helical span at residues valine 428–valine 448.

It belongs to the deoxyhypusine synthase family. In terms of assembly, heterotetramer formed by a homodimer of the non-catalytic regulatory subunit DHSp and a homodimer of the catalytic subunit DHSc where DHSc appears to bind spermidine and DHSp appears to bind NAD(+). NAD(+) is required as a cofactor.

Its subcellular location is the membrane. It catalyses the reaction [eIF5A protein]-L-lysine + spermidine = [eIF5A protein]-deoxyhypusine + propane-1,3-diamine. It functions in the pathway protein modification; eIF5A hypusination. With respect to regulation, allosterically activated by DHSp. Inhibited by spermididine analog N1-guanyl-1,7-diamineoheptane (GC7). In terms of biological role, in association with the non-catalytic regulatory subunit DHSp, catalyzes the NAD-dependent oxidative cleavage of spermidine and the subsequent transfer of the butylamine moiety of spermidine to the epsilon-amino group of a specific lysine residue of the eIF5A precursor protein to form the intermediate deoxyhypusine residue. Regulates protein levels of its regulatory subunit DHSp. Required for cell growth and survival. The sequence is that of Deoxyhypusine synthase from Trypanosoma brucei brucei (strain 927/4 GUTat10.1).